The following is an 85-amino-acid chain: Large ribosomal subunit protein bL31 (85 aa).

A disordered region spans residues 65 to 85 (YGMGGAGKAGEDKKAGDKADA). The span at 73–85 (AGEDKKAGDKADA) shows a compositional bias: basic and acidic residues.

This sequence belongs to the bacterial ribosomal protein bL31 family. Type A subfamily. Part of the 50S ribosomal subunit.

Binds the 23S rRNA. This is Large ribosomal subunit protein bL31 from Synechococcus sp. (strain WH7803).